The sequence spans 296 residues: Uricase (296 aa).

Catalysis depends on charge relay system residues Lys-14 and Thr-61. Urate is bound by residues Thr-61, Asp-62, Phe-163, Arg-180, Val-229, Gln-230, and Asn-256. Catalysis depends on His-258, which acts as the Charge relay system.

This sequence belongs to the uricase family.

The protein localises to the peroxisome. It localises to the cytoplasm. Its subcellular location is the nucleus. It carries out the reaction urate + O2 + H2O = 5-hydroxyisourate + H2O2. It participates in purine metabolism; urate degradation; (S)-allantoin from urate: step 1/3. Its function is as follows. Catalyzes the oxidation of uric acid to 5-hydroxyisourate, which is further processed to form (S)-allantoin. This is Uricase from Schizosaccharomyces pombe (strain 972 / ATCC 24843) (Fission yeast).